Consider the following 168-residue polypeptide: Cytochrome c-type biogenesis protein CcmE (168 aa).

The Cytoplasmic portion of the chain corresponds to 1 to 7 (MTRKQRR). Residues 8–28 (LMLIGVCGAVLAVALGLVLWA) form a helical; Signal-anchor for type II membrane protein membrane-spanning segment. The Periplasmic portion of the chain corresponds to 29 to 168 (MRGTIVFFRS…SGEKPALRQQ (140 aa)). Positions 122 and 126 each coordinate heme. A disordered region spans residues 134 to 168 (ALKKQGHWQGEAKHPGGTAPAPQTASGEKPALRQQ).

Belongs to the CcmE/CycJ family.

It localises to the cell inner membrane. In terms of biological role, heme chaperone required for the biogenesis of c-type cytochromes. Transiently binds heme delivered by CcmC and transfers the heme to apo-cytochromes in a process facilitated by CcmF and CcmH. The protein is Cytochrome c-type biogenesis protein CcmE of Methylobacterium nodulans (strain LMG 21967 / CNCM I-2342 / ORS 2060).